A 500-amino-acid chain; its full sequence is MSEGKVDEFMAITGADDAAIATQFIEMADGNLNTAISLFFENGGAALLSSNNTPTPSNSTPMAPTSVDSDADAQLAERLQREAYQQQQPDQDYVRPPDEARHEVLTETSGFPISYGGIGGRFEPLHRVNDMFDEGRPESIFNQRLDDTNTNTYINDNSSDSLDSEEENDDDEYEYVEEPVIELDEDGNIKEYTKLVRKPKTISKEQKLALLFRPPFSIMSKLDLDAAKQKARAKQKWIMINIQDSGIFQCQALNRDLWSSRPVKTIIKENFVFLQYQYESRNAQPYLQFYHLNNKDDLPHIAILDPITGERVKQWNRVVPIPEQFISEINEFLASFSLDPKVPNPTVNEPLPKVDPTTLTEEQQMELAIKESLNNNSSKSNQEEVPSTGEEQKRVQEPDPFSTIEARVHPEPPNKPGITTRIQIRTGDGSRLVRRFNALEDTVRTIYEVIKTEMDGFADSRFTLNDHQREDLIDKLNMTIADAGLKNSSLLLEKLDPEIE.

Low complexity predominate over residues S50–P61. The disordered stretch occupies residues S50–D70. A Phosphoserine modification is found at S139. 2 disordered regions span residues N142 to D169 and E371 to D399. Low complexity predominate over residues T148–S161. The UBX domain occupies K415 to E493.

Interacts with CDC48.

Its subcellular location is the nucleus. The protein localises to the cytoplasm. Involved in CDC48-dependent protein degradation through the ubiquitin/proteasome pathway. The polypeptide is UBX domain-containing protein 5 (UBX5) (Saccharomyces cerevisiae (strain ATCC 204508 / S288c) (Baker's yeast)).